The sequence spans 144 residues: Large ribosomal subunit protein uL16 (144 aa).

It belongs to the universal ribosomal protein uL16 family. As to quaternary structure, part of the 50S ribosomal subunit.

Its function is as follows. Binds 23S rRNA and is also seen to make contacts with the A and possibly P site tRNAs. The sequence is that of Large ribosomal subunit protein uL16 from Porphyromonas gingivalis (strain ATCC 33277 / DSM 20709 / CIP 103683 / JCM 12257 / NCTC 11834 / 2561).